The chain runs to 216 residues: Maleylacetoacetate isomerase (216 aa).

Residue methionine 1 is modified to N-acetylmethionine. A GST N-terminal domain is found at 4–87; the sequence is GKPVLYSYFR…YLEETRPIPR (84 aa). Residues 14-19 and glutamine 45 each bind glutathione; that span reads SSCSWR. Lysine 57 carries the N6-succinyllysine modification. Glutathione contacts are provided by residues valine 59, 71–72, glutamine 111, and 115–117; these read QS and NLS. The GST C-terminal domain occupies 92–212; the sequence is DPQKRAIVRM…HPCRQPDTPA (121 aa). Threonine 136 carries the phosphothreonine modification. Phosphoserine is present on serine 137. At lysine 177 the chain carries N6-succinyllysine. Serine 181 carries the post-translational modification Phosphoserine.

The protein belongs to the GST superfamily. Zeta family. In terms of assembly, homodimer. Glutathione is required as a cofactor. Post-translationally, the N-terminus is blocked.

The protein resides in the cytoplasm. It carries out the reaction 4-maleylacetoacetate = 4-fumarylacetoacetate. The enzyme catalyses RX + glutathione = an S-substituted glutathione + a halide anion + H(+). It participates in amino-acid degradation; L-phenylalanine degradation; acetoacetate and fumarate from L-phenylalanine: step 5/6. Probable bifunctional enzyme showing minimal glutathione-conjugating activity with ethacrynic acid and 7-chloro-4-nitrobenz-2-oxa-1, 3-diazole and maleylacetoacetate isomerase activity. Also has low glutathione peroxidase activity with t-butyl and cumene hydroperoxides. Is able to catalyze the glutathione dependent oxygenation of dichloroacetic acid to glyoxylic acid. The protein is Maleylacetoacetate isomerase (Gstz1) of Rattus norvegicus (Rat).